The chain runs to 320 residues: 1-aminocyclopropane-1-carboxylate oxidase (320 aa).

Positions 156–256 (PTFGTKVSNY…RMSIASFYNP (101 aa)) constitute a Fe2OG dioxygenase domain. 3 residues coordinate Fe cation: histidine 180, aspartate 182, and histidine 237.

This sequence belongs to the iron/ascorbate-dependent oxidoreductase family. It depends on Fe cation as a cofactor.

It catalyses the reaction 1-aminocyclopropane-1-carboxylate + L-ascorbate + O2 = ethene + L-dehydroascorbate + hydrogen cyanide + CO2 + 2 H2O. It functions in the pathway alkene biosynthesis; ethylene biosynthesis via S-adenosyl-L-methionine; ethylene from S-adenosyl-L-methionine: step 2/2. In Brassica juncea (Indian mustard), this protein is 1-aminocyclopropane-1-carboxylate oxidase (ACO).